Consider the following 233-residue polypeptide: Large ribosomal subunit protein uL2 (233 aa).

Residues 195–233 are disordered; that stretch reads PHGGGNHQHVGRPSTVGRNAPPGRKVGRLSPKRRRVNGR. The segment covering 219-233 has biased composition (basic residues); it reads KVGRLSPKRRRVNGR.

This sequence belongs to the universal ribosomal protein uL2 family. As to quaternary structure, part of the 50S ribosomal subunit. Forms a bridge to the 30S subunit in the 70S ribosome.

In terms of biological role, one of the primary rRNA binding proteins. Required for association of the 30S and 50S subunits to form the 70S ribosome, for tRNA binding and peptide bond formation. It has been suggested to have peptidyltransferase activity; this is somewhat controversial. Makes several contacts with the 16S rRNA in the 70S ribosome. This chain is Large ribosomal subunit protein uL2, found in Thermoplasma acidophilum (strain ATCC 25905 / DSM 1728 / JCM 9062 / NBRC 15155 / AMRC-C165).